We begin with the raw amino-acid sequence, 613 residues long: Cilia- and flagella-associated protein 100 (613 aa).

A disordered region spans residues 36 to 55 (KSKESKKNKGNVTISDRSSN). Residues 45–55 (GNVTISDRSSN) show a composition bias toward polar residues. Coiled coils occupy residues 167 to 198 (ALAMKRNEIQRLEMLATREENRLERAEKFLEK), 233 to 260 (VEIRELTAQITSIKSEISKFEDTLKHYK), 396 to 435 (FTKLEEENLSLIQNTQEMEETLDELNVTLKNTQIRMDKEV), and 504 to 580 (GTVQ…RGRK).

Belongs to the CFAP100 family.

The protein resides in the cytoplasm. It localises to the cytoskeleton. It is found in the cilium axoneme. In terms of biological role, may play a role in ciliary/flagellar motility by regulating the assembly and the activity of axonemal inner dynein arm. This chain is Cilia- and flagella-associated protein 100, found in Mus musculus (Mouse).